We begin with the raw amino-acid sequence, 375 residues long: cAMP-dependent protein kinase regulatory subunit (375 aa).

The interval 28 to 142 (RFCADYFNER…SLYKSVSHNF (115 aa)) is dimerization and phosphorylation. Positions 41–50 (REEADDDGPR) are enriched in basic and acidic residues. The segment at 41–102 (REEADDDGPR…EPAAPFTRRT (62 aa)) is disordered. A compositionally biased stretch (polar residues) spans 64 to 82 (GSSSRSTDGSLFRSSFADT). A compositionally biased stretch (low complexity) spans 83 to 97 (SSEGPGSASSEPAAP). Phosphoserine is present on Ser-103. Residues 143-258 (LFGN…FLKE), Glu-208, Arg-217, 261-375 (ILSD…DPTK), Glu-328, and Arg-337 contribute to the 3',5'-cyclic AMP site.

The protein belongs to the cAMP-dependent kinase regulatory chain family. As to quaternary structure, tetramer, composed of 2 regulatory (R) and 2 catalytic (C) subunits. In the presence of cAMP it dissociates into 2 active monomeric C subunits and an R dimer.

In Yarrowia lipolytica (strain CLIB 122 / E 150) (Yeast), this protein is cAMP-dependent protein kinase regulatory subunit (PKAR).